The chain runs to 89 residues: Small ribosomal subunit protein uS15 (89 aa).

This sequence belongs to the universal ribosomal protein uS15 family. Part of the 30S ribosomal subunit. Forms a bridge to the 50S subunit in the 70S ribosome, contacting the 23S rRNA.

In terms of biological role, one of the primary rRNA binding proteins, it binds directly to 16S rRNA where it helps nucleate assembly of the platform of the 30S subunit by binding and bridging several RNA helices of the 16S rRNA. Functionally, forms an intersubunit bridge (bridge B4) with the 23S rRNA of the 50S subunit in the ribosome. The sequence is that of Small ribosomal subunit protein uS15 from Levilactobacillus brevis (strain ATCC 367 / BCRC 12310 / CIP 105137 / JCM 1170 / LMG 11437 / NCIMB 947 / NCTC 947) (Lactobacillus brevis).